A 271-amino-acid polypeptide reads, in one-letter code: Acetyl-coenzyme A carboxylase carboxyl transferase subunit beta (271 aa).

Residues Leu21–Ala271 form the CoA carboxyltransferase N-terminal domain. 4 residues coordinate Zn(2+): Cys25, Cys28, Cys43, and Cys46. The segment at Cys25–Cys46 adopts a C4-type zinc-finger fold.

It belongs to the AccD/PCCB family. Acetyl-CoA carboxylase is a heterohexamer composed of biotin carboxyl carrier protein (AccB), biotin carboxylase (AccC) and two subunits each of ACCase subunit alpha (AccA) and ACCase subunit beta (AccD). It depends on Zn(2+) as a cofactor.

Its subcellular location is the cytoplasm. It carries out the reaction N(6)-carboxybiotinyl-L-lysyl-[protein] + acetyl-CoA = N(6)-biotinyl-L-lysyl-[protein] + malonyl-CoA. It functions in the pathway lipid metabolism; malonyl-CoA biosynthesis; malonyl-CoA from acetyl-CoA: step 1/1. Its function is as follows. Component of the acetyl coenzyme A carboxylase (ACC) complex. Biotin carboxylase (BC) catalyzes the carboxylation of biotin on its carrier protein (BCCP) and then the CO(2) group is transferred by the transcarboxylase to acetyl-CoA to form malonyl-CoA. The chain is Acetyl-coenzyme A carboxylase carboxyl transferase subunit beta from Lacticaseibacillus casei (strain BL23) (Lactobacillus casei).